Here is a 525-residue protein sequence, read N- to C-terminus: Ribosomal protein S6 kinase beta-1 (525 aa).

The interval 1-54 (MRRRRRRDGFYPAPDFRDREAEDMAGVFDIDLDQPEDAGSEDELEEGGQLNESM) is disordered. The TOS motif motif lies at 28 to 32 (FDIDL). A compositionally biased stretch (acidic residues) spans 30 to 46 (IDLDQPEDAGSEDELEE). In terms of domain architecture, Protein kinase spans 91 to 352 (FELLRVLGKG…AGEVQAHPFF (262 aa)). Residues 97-105 (LGKGGYGKV) and Lys-123 each bind ATP. Asp-218 (proton acceptor) is an active-site residue. Thr-252 is subject to Phosphothreonine; by PDPK1. Residues 353 to 423 (RHINWEELLA…VAPSVLESVK (71 aa)) enclose the AGC-kinase C-terminal domain. A disordered region spans residues 380-399 (SQFDSKFTRQTPVDSPDDST). Over residues 381 to 399 (QFDSKFTRQTPVDSPDDST) the composition is skewed to polar residues. Ser-394 bears the Phosphoserine mark. Residue Thr-412 is modified to Phosphothreonine; by MTOR, NEK6 and NEK7. Residues 424-525 (EKFSFEPKIR…KRPEHLRMNL (102 aa)) form an autoinhibitory domain region. 2 positions are modified to phosphoserine: Ser-434 and Ser-441. Thr-444 is subject to Phosphothreonine. 2 positions are modified to phosphoserine: Ser-447 and Ser-452. Position 516 is an N6-acetyllysine (Lys-516).

This sequence belongs to the protein kinase superfamily. AGC Ser/Thr protein kinase family. S6 kinase subfamily. Interacts with PPP1R9A/neurabin-1. Interacts with RPTOR. Interacts with IRS1. Interacts with EIF3B and EIF3C. Interacts with TRAF4. Interacts with POLDIP3. Interacts (via N-terminus) with IER5. In terms of assembly, (Microbial infection) Interacts with Mumps virus phosphoprotein; this interaction may play a role in the viral replication and transcription. In terms of processing, phosphorylation at Thr-412 is regulated by mTORC1. The phosphorylation at this site is maintained by an agonist-dependent autophosphorylation mechanism. Activated by phosphorylation at Thr-252 by PDPK1. Dephosphorylation by PPP1CC at Thr-412 in mitochondrion. Widely expressed.

Its subcellular location is the synapse. It is found in the synaptosome. It localises to the mitochondrion outer membrane. The protein localises to the mitochondrion. The protein resides in the nucleus. Its subcellular location is the cytoplasm. It catalyses the reaction L-seryl-[protein] + ATP = O-phospho-L-seryl-[protein] + ADP + H(+). The catalysed reaction is L-threonyl-[protein] + ATP = O-phospho-L-threonyl-[protein] + ADP + H(+). Its activity is regulated as follows. Activation requires multiple phosphorylation events on serine/threonine residues. Activation appears to be first mediated by phosphorylation of multiple sites in the autoinhibitory domain, which facilitates phosphorylation at Thr-412, disrupting the autoinhibitory mechanism and allowing phosphorylation of Thr-252 by PDPK1. The active conformation of the kinase is believed to be stabilized by a mechanism involving three conserved phosphorylation sites located in the kinase domain activation loop (Thr-252) and in the AGC-kinase C-terminal domain (Ser-394 in the middle of the tail/linker region and Thr-412 within a hydrophobic motif at its end). Activated by mTORC1; isoform Alpha I and isoform Alpha II are sensitive to rapamycin, which inhibits activating phosphorylation at Thr-412. Activated by PDPK1. Serine/threonine-protein kinase that acts downstream of mTOR signaling in response to growth factors and nutrients to promote cell proliferation, cell growth and cell cycle progression. Regulates protein synthesis through phosphorylation of EIF4B, RPS6 and EEF2K, and contributes to cell survival by repressing the pro-apoptotic function of BAD. Under conditions of nutrient depletion, the inactive form associates with the EIF3 translation initiation complex. Upon mitogenic stimulation, phosphorylation by the mechanistic target of rapamycin complex 1 (mTORC1) leads to dissociation from the EIF3 complex and activation. The active form then phosphorylates and activates several substrates in the pre-initiation complex, including the EIF2B complex and the cap-binding complex component EIF4B. Also controls translation initiation by phosphorylating a negative regulator of EIF4A, PDCD4, targeting it for ubiquitination and subsequent proteolysis. Promotes initiation of the pioneer round of protein synthesis by phosphorylating POLDIP3/SKAR. In response to IGF1, activates translation elongation by phosphorylating EEF2 kinase (EEF2K), which leads to its inhibition and thus activation of EEF2. Also plays a role in feedback regulation of mTORC2 by mTORC1 by phosphorylating MAPKAP1/SIN1, MTOR and RICTOR, resulting in the inhibition of mTORC2 and AKT1 signaling. Also involved in feedback regulation of mTORC1 and mTORC2 by phosphorylating DEPTOR. Mediates cell survival by phosphorylating the pro-apoptotic protein BAD and suppressing its pro-apoptotic function. Phosphorylates mitochondrial URI1 leading to dissociation of a URI1-PPP1CC complex. The free mitochondrial PPP1CC can then dephosphorylate RPS6KB1 at Thr-412, which is proposed to be a negative feedback mechanism for the RPS6KB1 anti-apoptotic function. Mediates TNF-alpha-induced insulin resistance by phosphorylating IRS1 at multiple serine residues, resulting in accelerated degradation of IRS1. In cells lacking functional TSC1-2 complex, constitutively phosphorylates and inhibits GSK3B. May be involved in cytoskeletal rearrangement through binding to neurabin. Phosphorylates and activates the pyrimidine biosynthesis enzyme CAD, downstream of MTOR. Following activation by mTORC1, phosphorylates EPRS and thereby plays a key role in fatty acid uptake by adipocytes and also most probably in interferon-gamma-induced translation inhibition. This Homo sapiens (Human) protein is Ribosomal protein S6 kinase beta-1 (RPS6KB1).